Reading from the N-terminus, the 423-residue chain is uncharacterized protein (423 aa).

Substrate-binding residues include Ser51, Asp138, and Asn150. ATP-binding positions include 170-171 and 214-220; these read TD and TGGMRTK. The 92-residue stretch at 315-406 folds into the PUA domain; that stretch reads KGAIIIDENS…EKIHDVLGYS (92 aa).

Belongs to the glutamate 5-kinase family.

Its subcellular location is the cytoplasm. This is an uncharacterized protein from Saccharomyces cerevisiae (strain ATCC 204508 / S288c) (Baker's yeast).